The following is a 64-amino-acid chain: Large ribosomal subunit protein uL29 (64 aa).

The protein belongs to the universal ribosomal protein uL29 family.

In Psychrobacter sp. (strain PRwf-1), this protein is Large ribosomal subunit protein uL29.